A 286-amino-acid chain; its full sequence is uncharacterized protein (286 aa).

Residues 1–58 (MLLEGIETLLVLSKEKTMSRTGSQLYISQSAVSKRIANLEKKLGKKLIVPAGRHIKLT) enclose the HTH lysR-type domain. Positions 18–37 (MSRTGSQLYISQSAVSKRIA) form a DNA-binding region, H-T-H motif.

It belongs to the LysR transcriptional regulatory family.

This is an uncharacterized protein from Vibrio cholerae serotype O1 (strain ATCC 39315 / El Tor Inaba N16961).